We begin with the raw amino-acid sequence, 103 residues long: Small ribosomal subunit protein uS14c (103 aa).

It belongs to the universal ribosomal protein uS14 family. As to quaternary structure, part of the 30S ribosomal subunit.

The protein localises to the plastid. The protein resides in the chloroplast. Its function is as follows. Binds 16S rRNA, required for the assembly of 30S particles. This is Small ribosomal subunit protein uS14c from Agrostis stolonifera (Creeping bentgrass).